A 176-amino-acid polypeptide reads, in one-letter code: Myelin basic protein (176 aa).

Residues 1–11 (MASQKHSRGHG) show a composition bias toward basic residues. Residues 1-176 (MASQKHSRGH…SRSSSPMARR (176 aa)) are disordered. An N-acetylalanine modification is found at Ala2. Ser7 is modified (phosphoserine). Arg25 and Arg33 each carry citrulline. Residue Ser58 is modified to Phosphoserine. Asn97 carries the deamidated asparagine modification. Position 103 is a phosphothreonine (Thr103). Gln108 carries the deamidated glutamine modification. Symmetric dimethylarginine is present on Arg111. Ser117 is subject to Phosphoserine. Basic and acidic residues predominate over residues 134 to 153 (SLEHHKSSYKGYKDPHREGH). Polar residues predominate over residues 166-176 (RSRSSSPMARR). Residues Ser167 and Ser171 each carry the phosphoserine modification. Citrulline is present on Arg176.

The protein belongs to the myelin basic protein family. In terms of assembly, homodimer. Post-translationally, as in other animals, several charge isomers may be produced as a result of optional post-translational modifications, such as phosphorylation of serine or threonine residues, deamidation of glutamine or asparagine residues, citrullination and methylation of arginine residues.

It is found in the myelin membrane. Is, with PLP, the most abundant protein component of the myelin membrane in the CNS. Plays a role in both the formation and stabilization of this compact multilayer arrangement of bilayers. Each splice variant and charge isomer may have a specialized function in the assembly of an optimized, biochemically functional myelin membrane. The protein is Myelin basic protein (mbp) of Xenopus laevis (African clawed frog).